Here is a 914-residue protein sequence, read N- to C-terminus: MTDQRGPPPPHPQQANGYKKFPPHDNQYSGANNSQPNNHYNENLYSAREPHNNKQYQSKNGKYGTNKYNNRNNSQGNAQYYNNRFNNGYRLNNNDYNPAMLPGMQWPANYYAPQMYYIPQQMVPVASPPYTHQPLNTNPEPPSTPKTTKIEITTKTGERLNLKKFHEEKKASKGEEKNDGVEQKSKSGTPFEKEATPVLPANEAVKDTLTETSNEKSTSEAENTKRLFLEQVRLRKAAMERKKNGLISETEKKQETSNHDNTDTTKPNSVIESEPIKEAPKPTGEANEVVIDGKSGASVKTPQHVTGSVTKSVTFNEPENESSSQDVDELVKDDDTTEISDTTGGKTVNKSDDETINSVITTEENTVKETEPSTSDIEMPTVSQLLETLGKAQPISDIYEFAYPENVERPDIKYKKPSVKYTYGPTFLLQFKDKLKFRPDPAWVEAVSSKIVIPPHIARNKPKDSGRFGGDFRSPSMRGMDHTSSSRVSSKRRSKRMGDDRRSNRGYTSRKDREKAAEKAEEQAPKEEIAPLVPSANRWIPKSRVKKTEKKLAPDGKTELFDKEEVERKMKSLLNKLTLEMFDSISSEILDIANQSKWEDDGETLKIVIEQIFHKACDEPHWSSMYAQLCGKVVKDLDPNIKDKENEGKNGPKLVLHYLVARCHEEFEKGWADKLPAGEDGNPLEPEMMSDEYYIAAAAKRRGLGLVRFIGYLYCLNLLTGKMMFECFRRLMKDLNNDPSEETLESVIELLNTVGEQFEHDKFVTPQATLEGSVLLDNLFMLLQHIIDGGTISNRIKFKLIDVKELREIKHWNSAKKDAGPKTIQQIHQEEEQLRQKKNSQRSNSRFNNHNQSNSNRYSSNRRNMQNTQRDSFASTKTGSFRNNQRNARKVEEVSQAPRANMFDALMNNDGDSD.

Residues 1–12 (MTDQRGPPPPHP) are compositionally biased toward pro residues. 4 disordered regions span residues 1 to 84 (MTDQ…YNNR), 128 to 205 (PPYT…NEAV), 240 to 351 (ERKK…VNKS), and 457 to 535 (IARN…LVPS). Over residues 26–44 (NQYSGANNSQPNNHYNENL) the composition is skewed to polar residues. The segment covering 59-73 (KNGKYGTNKYNNRNN) has biased composition (low complexity). Serine 74 is subject to Phosphoserine. Low complexity predominate over residues 145–155 (PKTTKIEITTK). The segment covering 156-195 (TGERLNLKKFHEEKKASKGEEKNDGVEQKSKSGTPFEKEA) has biased composition (basic and acidic residues). Threonine 196 carries the phosphothreonine modification. An interaction with PAB1 region spans residues 201–315 (ANEAVKDTLT…TGSVTKSVTF (115 aa)). Basic and acidic residues predominate over residues 240 to 263 (ERKKNGLISETEKKQETSNHDNTD). 2 stretches are compositionally biased toward polar residues: residues 298–325 (SVKTPQHVTGSVTKSVTFNEPENESSSQ) and 339–348 (ISDTTGGKTV). Threonine 301 carries the phosphothreonine modification. The segment covering 496–529 (RMGDDRRSNRGYTSRKDREKAAEKAEEQAPKEEI) has biased composition (basic and acidic residues). Serine 503 carries the post-translational modification Phosphoserine. The MIF4G domain occupies 567–810 (ERKMKSLLNK…IDVKELREIK (244 aa)). The tract at residues 833–914 (QLRQKKNSQR…ALMNNDGDSD (82 aa)) is disordered. Positions 841–867 (QRSNSRFNNHNQSNSNRYSSNRRNMQN) are enriched in low complexity. Positions 868-886 (TQRDSFASTKTGSFRNNQR) are enriched in polar residues. Position 913 is a phosphoserine (serine 913).

It belongs to the eukaryotic initiation factor 4G family. Component of the eIF4F complex, which composition varies with external and internal environmental conditions. It is composed of at least eIF4A (TIF1/TIF2), eIF4E (TIF45) and eIF4G (TIF4631 or TIF4632). Interacts with PAT1 in a RNA-dependent manner.

Its subcellular location is the cytoplasm. Its function is as follows. Component of the eIF4F complex, which interacts with the mRNA cap structure and serves as an initial point of assembly for the translation apparatus. Stimulates translation by interaction with polyadenylate-binding protein PAB1, bringing the 5'- and 3'-ends of the mRNA in proximity. The formation of this circular mRNP structure appears to be critical for the synergistic effects of the cap and the poly(A) tail in facilitating translation initiation, recycling of ribosomes, and mRNA stability. TIF4632 is probably essential when TIF4631 is missing. The sequence is that of Eukaryotic initiation factor 4F subunit p130 from Saccharomyces cerevisiae (strain ATCC 204508 / S288c) (Baker's yeast).